The chain runs to 480 residues: Probable glycosyltransferase At5g25310 (480 aa).

At 1-10 (MDKFQSKFTR) the chain is on the cytoplasmic side. A helical; Signal-anchor for type II membrane protein membrane pass occupies residues 11–31 (FGFISICFGSIALVLLISHCS). Over 32-480 (TSFFDYSFQK…WLRRLNLKLT (449 aa)) the chain is Lumenal. N-linked (GlcNAc...) asparagine glycosylation is found at Asn-85, Asn-120, Asn-243, Asn-271, and Asn-281.

This sequence belongs to the glycosyltransferase 47 family.

The protein localises to the golgi apparatus membrane. In terms of biological role, may be involved in cell wall biosynthesis. The polypeptide is Probable glycosyltransferase At5g25310 (Arabidopsis thaliana (Mouse-ear cress)).